The following is a 549-amino-acid chain: OBERON-like protein (549 aa).

The tract at residues 1 to 56 is disordered; the sequence is MLPPRQQPRPGGLQTSLSLVSPDACGSPNPQERGSTSDQARDSPSESASSRETWPT. Composition is skewed to polar residues over residues 28 to 38 and 45 to 56; these read PNPQERGSTSD and SESASSRETWPT. The PHD-type zinc finger occupies 224–288; sequence LCMCVICYKF…LFRCHACSRT (65 aa). A coiled-coil region spans residues 394 to 520; sequence VQEAIRKMEA…YLFEKIKLQE (127 aa). The segment at 519-549 is disordered; the sequence is QESSRASQSSAGGNDPSQMMYSKIQDLIKNM. The span at 521 to 538 shows a compositional bias: polar residues; that stretch reads SSRASQSSAGGNDPSQMM.

Self-interacts and probably forms heteromers. Binds to VPg of pea seed borne mosaic virus (PSbMV), turnip mosaic virus (TuMV) and lettuce mosaic virus (LMV), but not with VPg of tobacco etch virus (TEV), cowpea mosaic virus (CPMV), tomato black ring virus (TBRV) and grapevine fan leaf virus (GFLV).

The protein resides in the nucleus. Required for the maintenance and/or establishment of both the shoot and root meristems, probably by controlling the expression of the meristem genes and of genes required for auxin responses. Involved in the development of the basal pole and in auxin-mediated root and vascular development in the embryo. Confers sensitivity to turnip mosaic virus (TuMV) probably by promoting viral movement and multiplication via interaction with TuMV VPg. This is OBERON-like protein (PVIP) from Nicotiana benthamiana.